The chain runs to 245 residues: 1-(5-phosphoribosyl)-5-[(5-phosphoribosylamino)methylideneamino] imidazole-4-carboxamide isomerase (245 aa).

The Proton acceptor role is filled by Asp8. Catalysis depends on Asp129, which acts as the Proton donor.

The protein belongs to the HisA/HisF family.

The protein resides in the cytoplasm. The catalysed reaction is 1-(5-phospho-beta-D-ribosyl)-5-[(5-phospho-beta-D-ribosylamino)methylideneamino]imidazole-4-carboxamide = 5-[(5-phospho-1-deoxy-D-ribulos-1-ylimino)methylamino]-1-(5-phospho-beta-D-ribosyl)imidazole-4-carboxamide. The protein operates within amino-acid biosynthesis; L-histidine biosynthesis; L-histidine from 5-phospho-alpha-D-ribose 1-diphosphate: step 4/9. This chain is 1-(5-phosphoribosyl)-5-[(5-phosphoribosylamino)methylideneamino] imidazole-4-carboxamide isomerase, found in Geotalea uraniireducens (strain Rf4) (Geobacter uraniireducens).